The primary structure comprises 427 residues: Glutamate-1-semialdehyde 2,1-aminomutase (427 aa).

An N6-(pyridoxal phosphate)lysine modification is found at Lys265.

This sequence belongs to the class-III pyridoxal-phosphate-dependent aminotransferase family. HemL subfamily. As to quaternary structure, homodimer. Pyridoxal 5'-phosphate serves as cofactor.

Its subcellular location is the cytoplasm. It carries out the reaction (S)-4-amino-5-oxopentanoate = 5-aminolevulinate. Its pathway is porphyrin-containing compound metabolism; protoporphyrin-IX biosynthesis; 5-aminolevulinate from L-glutamyl-tRNA(Glu): step 2/2. This Bordetella bronchiseptica (strain ATCC BAA-588 / NCTC 13252 / RB50) (Alcaligenes bronchisepticus) protein is Glutamate-1-semialdehyde 2,1-aminomutase.